Here is a 444-residue protein sequence, read N- to C-terminus: Jacalin-related lectin 42 (444 aa).

An N-acetylalanine modification is found at Ala-2. 3 consecutive Jacalin-type lectin domains span residues 2 to 143, 146 to 289, and 297 to 441; these read ALMV…YYIR, ATKS…YYAP, and TEKL…HVIP.

This sequence belongs to the jacalin lectin family.

This Arabidopsis thaliana (Mouse-ear cress) protein is Jacalin-related lectin 42 (JAL42).